The chain runs to 539 residues: Netrin-G1 (539 aa).

A signal peptide spans 1–18 (MYLSRFLSIHALWVTVSS). Intrachain disulfides connect Cys33-Cys50, Cys72-Cys92, and Cys80-Cys88. A Laminin N-terminal domain is found at 46–296 (DYTACQPEST…AISDIKVRGR (251 aa)). The tract at residues 80–91 (CAMGNPYMCNNE) is NGL discriminant loop I. N-linked (GlcNAc...) asparagine glycosylation occurs at Asn133. A disulfide bond links Cys182 and Cys206. Residues 208–214 (EEYSTGY) form an NGL discriminant loop II region. Residues 273 to 275 (EIF) form an NGL discriminant loop III region. 13 cysteine pairs are disulfide-bonded: Cys297-Cys306, Cys299-Cys315, Cys317-Cys326, Cys329-Cys354, Cys364-Cys373, Cys366-Cys384, Cys387-Cys396, Cys399-Cys417, Cys420-Cys432, Cys422-Cys438, Cys440-Cys449, Cys452-Cys462, and Cys488-Cys497. Laminin EGF-like domains follow at residues 297–356 (CKCN…TCIP), 364–419 (CECF…VCIE), and 420–469 (CYCN…VCDN). Asn320 is a glycosylation site (N-linked (GlcNAc...) asparagine). N-linked (GlcNAc...) asparagine glycosylation occurs at Asn406. A glycan (N-linked (GlcNAc...) asparagine) is linked at Asn433. Ser510 is lipidated: GPI-anchor amidated serine. A propeptide spans 511 to 539 (ESGQGAPPRGSPALLLLTMLLGTAGPLVF) (removed in mature form).

N-glycosylated. Expression is restricted primarily to neurons of the CNS, particularly in the dorsal thalamus, olfactory bulb and inferior colliculus. Isoform 1A and isoform 1D are the major products in adult brain.

It localises to the cell membrane. Involved in controlling patterning and neuronal circuit formation at the laminar, cellular, subcellular and synaptic levels. Promotes neurite outgrowth of both axons and dendrites. The chain is Netrin-G1 (Ntng1) from Mus musculus (Mouse).